A 1592-amino-acid chain; its full sequence is MRAPVLAVLAVLLLGTVRAAMDECYEEGSPQRCMPEFVNAAFNATVVATNTCGTPPEEYCVQTGVTGVTKSCHICDSGQFHLQHGAEYLTDYNNQAEITWWQSQTMLAGIQYPSTINLTLHLGKAFDITYVRLKFHTSRPESFALYKRTHEDGPWIPYQYYSGSCEKTYQKFNRGFIRTGEDEQQALCTDEFSDISPLTGGNVAFSTLEGRPSAYNFDNSPVLQEWVTATDIRVTLNRLNTFGDEVFSDPKVLKSYYYAISDFAVGGRCKCNGHASECVRNEFEKIVCNCKHNTFGSDCEKCLPFYNDRPWRRSTADSPNECLPCNCNGRSQECYFDPELYRSTGHGGHCTGCADNTDGPNCERCRENYYRQDNNEPCHACQCNPVGSLSTQCDNYGRCSCKPGVMGEKCDRCQPGFHSLTEAGCRPCACNPAGSTDECNVETGRCSCKDNVEGFNCERCKPGFFHLDEANPRGCTPCFCYGHSSVCSSAEGYRVSSIVSTFESGVEGWTAQQRDGSEYSLSWVSDSSAVSVISESYFPIYFIAPAKFLGNQGASYGQNLTFSFRVERRDTRLSAEDLVLEGAGLRVSVPLIAQGNSYPSETTQRYIFRMHEATDYPWRPSVSPFEFQKMLQNLTAIKIRGSYSERSAGFLEEVSLVTAVAGAGPSAPWVEICSCPTGYIGQFCERCAPGYRRENPSQGPYSPCVLCTCNGHSDTCDPESGVCDCQHNTAGPHCERCSEGYYGDSTTGSASDCQPCPCPGGSSCAVVPRTKEVVCTNCPLGTTGKRCELCDDGYFGDPLGENGAPRPCRICECSNNIDPNAVGNCDRLTGECLKCIYNTGGFYCDRCRDGFYGNPLAQNPDLKCRACSCNPYGTVKGQSGCNQVTGQCECLPHVTERDCSACEPGFYNLLSGRGCERCDCHSLGSTSGQCDVRTGQCECHPGISGQQCQQCEPNHFGFGPEGCKPCDCDPEGSGSLQCKEDGRCECKSGFVGTRCDQCEENYFYNRSGPGCQECPACYRLVKDKVNEQRGKLQELEDLLKNLSTGEENITDQAFEERLREAEKAVNDLLLDAQSSKDVDQGMLDRLAEINTTLSFQLERLQNIRDMIRDTDKQAQEARDRVENTEFIIDSARVQLEKAKMAIANVSITPPESTGDPNNMTLLAEEARKLAERHMQEARDIEKAAKEANDTANEALRLLQKTLASENQTALDIEELNRKYAQAKDIARELEKQASKVHAEAEEAGNRALQIYANLTSVPSIDTTALQNEADKIQKEAEELDSLIDRKLRDYEDLREDMRGREMEVKNLLDKGKTEQQTADQLLARADAAKAQAEEAAKKGRETLQEANDILNKLRDFDKRVNDNKTAAEAALRKIPMIAQTIAEANNKTRQAESALGNANADARGAKSKAEEAEALANTVQKKAATARAEADNTFKEVTDLDGELQDMLQQLQEAENQLKKKQAEAESDEKMAEMASNATKDAESNANNSKKSVNGVLATIDELLSRLGQLDSVDVGQLTVLEKTLDDAKNQLRDSDLDRKLAELQESSNLQRVALDSYSRDIDQILRDIANLEDIKNTLPAGCYNTPIIEKP.

Residues 1 to 19 form the signal peptide; the sequence is MRAPVLAVLAVLLLGTVRA. The region spanning 29-268 is the Laminin N-terminal domain; that stretch reads SPQRCMPEFV…AISDFAVGGR (240 aa). N-linked (GlcNAc...) asparagine glycans are attached at residues N43 and N117. Disulfide bonds link C269/C278, C271/C288, C290/C299, C302/C322, C325/C334, C327/C350, C353/C362, C365/C378, C381/C393, C383/C399, C401/C410, C413/C425, C428/C439, C430/C446, C448/C457, and C460/C475. 4 Laminin EGF-like domains span residues 269–324, 325–380, 381–427, and 428–477; these read CKCN…ECLP, CNCN…PCHA, CQCN…GCRP, and CACN…GCTP. One can recognise a Laminin IV type A domain in the interval 504–672; the sequence is SGVEGWTAQQ…AGPSAPWVEI (169 aa). Residues N559 and N633 are each glycosylated (N-linked (GlcNAc...) asparagine). 24 disulfides stabilise this stretch: C707–C716, C709–C723, C725–C734, C737–C753, C756–C764, C758–C775, C778–C787, C790–C808, C811–C825, C813–C832, C835–C844, C847–C864, C867–C881, C869–C888, C890–C899, C902–C915, C918–C930, C920–C937, C939–C948, C951–C963, C966–C978, C968–C984, C986–C995, and C998–C1011. 6 Laminin EGF-like domains span residues 707–755, 756–810, 811–866, 867–917, 918–965, and 966–1013; these read CTCN…DCQP, CPCP…PCRI, CECS…KCRA, CSCN…GCER, CDCH…GCKP, and CDCD…GCQE. N1005, N1041, N1048, N1090, N1144, N1158, N1188, N1206, N1253, N1363, and N1386 each carry an N-linked (GlcNAc...) asparagine glycan. The domain II and I stretch occupies residues 1013–1592; that stretch reads ECPACYRLVK…CYNTPIIEKP (580 aa). A coiled-coil region spans residues 1018–1477; that stretch reads YRLVKDKVNE…DEKMAEMASN (460 aa). Over residues 1456-1472 the composition is skewed to basic and acidic residues; it reads NQLKKKQAEAESDEKMA. The interval 1456–1489 is disordered; that stretch reads NQLKKKQAEAESDEKMAEMASNATKDAESNANNS. The segment covering 1476-1489 has biased composition (polar residues); it reads SNATKDAESNANNS. N-linked (GlcNAc...) asparagine glycans are attached at residues N1477 and N1487. The stretch at 1515 to 1579 forms a coiled coil; sequence VGQLTVLEKT…ANLEDIKNTL (65 aa).

In terms of assembly, laminin is a complex glycoprotein, consisting of three different polypeptide chains (alpha, beta, gamma), which are bound to each other by disulfide bonds into a cross-shaped molecule comprising one long and three short arms with globules at each end.

The protein resides in the secreted. Its subcellular location is the extracellular space. It localises to the extracellular matrix. It is found in the basement membrane. Functionally, binding to cells via a high affinity receptor, laminin is thought to mediate the attachment, migration and organization of cells into tissues during embryonic development by interacting with other extracellular matrix components. The sequence is that of Laminin subunit gamma-1 (lamc1) from Xenopus tropicalis (Western clawed frog).